We begin with the raw amino-acid sequence, 185 residues long: Thymidine kinase (185 aa).

8–15 serves as a coordination point for ATP; it reads GPMYSGKT. The active-site Proton acceptor is E85. F117 lines the substrate pocket. Positions 142 and 145 each coordinate Zn(2+). 161-165 lines the substrate pocket; it reads IIEIG. Zn(2+) is bound by residues C174 and C177.

It belongs to the thymidine kinase family.

The catalysed reaction is thymidine + ATP = dTMP + ADP + H(+). The polypeptide is Thymidine kinase (TK) (Choristoneura fumiferana entomopoxvirus (CfEPV)).